We begin with the raw amino-acid sequence, 403 residues long: Phosphopentomutase (403 aa).

Residues D13, D298, H303, D339, H340, and H351 each contribute to the Mn(2+) site.

It belongs to the phosphopentomutase family. Mn(2+) serves as cofactor.

The protein resides in the cytoplasm. The enzyme catalyses 2-deoxy-alpha-D-ribose 1-phosphate = 2-deoxy-D-ribose 5-phosphate. It catalyses the reaction alpha-D-ribose 1-phosphate = D-ribose 5-phosphate. It participates in carbohydrate degradation; 2-deoxy-D-ribose 1-phosphate degradation; D-glyceraldehyde 3-phosphate and acetaldehyde from 2-deoxy-alpha-D-ribose 1-phosphate: step 1/2. In terms of biological role, isomerase that catalyzes the conversion of deoxy-ribose 1-phosphate (dRib-1-P) and ribose 1-phosphate (Rib-1-P) to deoxy-ribose 5-phosphate (dRib-5-P) and ribose 5-phosphate (Rib-5-P), respectively. The polypeptide is Phosphopentomutase (Streptococcus pyogenes serotype M12 (strain MGAS2096)).